We begin with the raw amino-acid sequence, 393 residues long: Probable acetyl-CoA acyltransferase (393 aa).

The Acyl-thioester intermediate role is filled by cysteine 88. Active-site proton acceptor residues include histidine 349 and cysteine 378.

The protein belongs to the thiolase-like superfamily. Thiolase family.

Its subcellular location is the cytoplasm. The enzyme catalyses 2 acetyl-CoA = acetoacetyl-CoA + CoA. The polypeptide is Probable acetyl-CoA acyltransferase (Staphylococcus aureus (strain COL)).